A 334-amino-acid polypeptide reads, in one-letter code: Serine/Arginine-related protein 53 (334 aa).

A compositionally biased stretch (basic and acidic residues) spans 1–13 (MGRRSSDTEEESR). Disordered stretches follow at residues 1–179 (MGRR…HLPP), 198–220 (DEAL…EDQA), and 246–290 (RSSK…SIPT). Residues 14–24 (SKRKKKHRRRS) are compositionally biased toward basic residues. Residues 44-62 (PRSDSRSWSRDRQLRSHSY) show a composition bias toward basic and acidic residues. Positions 78–118 (SRRKRSRSRSRGRGKPYRVQRSRSKSRTRRSRSRPRPRSHS) are enriched in basic residues. 3 stretches are compositionally biased toward basic and acidic residues: residues 132 to 166 (RSRD…KRGD), 198 to 218 (DEAL…KEED), and 247 to 256 (SSKDVKKAVE). Residues 180–236 (AEQAKARLQLVLEAAAKADEALKAKERSEEEAKRRKEEDQATLVEQVKRVKEIEAIE) adopt a coiled-coil conformation. The span at 265–278 (AASGPASAAAEPPS) shows a compositional bias: low complexity.

Interacts (via Arg/Ser-rich domain) with LUC7L3, RBM39 and RSF1. Phosphorylated.

It localises to the nucleus. The protein resides in the nucleus speckle. It is found in the cytoplasm. Its function is as follows. Plays a role in pre-mRNA splicing. Involved in both constitutive and alternative pre-mRNA splicing. May have a role in the recognition of the 3' splice site during the second step of splicing. The chain is Serine/Arginine-related protein 53 (Rsrc1) from Mus musculus (Mouse).